A 117-amino-acid chain; its full sequence is Immunoglobulin lambda variable 1-51 (117 aa).

Positions methionine 1–alanine 19 are cleaved as a signal peptide. The residue at position 20 (glutamine 20) is a Pyrrolidone carboxylic acid. Positions glutamine 20 to serine 44 are framework-1. The Ig-like domain maps to glutamine 20–alanine 117. The cysteines at positions 41 and 108 are disulfide-linked. The tract at residues serine 45–tyrosine 52 is complementarity-determining-1. The tract at residues valine 53–tyrosine 69 is framework-2. The complementarity-determining-2 stretch occupies residues aspartate 70–asparagine 72. The tract at residues lysine 73–cysteine 108 is framework-3. The complementarity-determining-3 stretch occupies residues glycine 109–alanine 117.

As to quaternary structure, immunoglobulins are composed of two identical heavy chains and two identical light chains; disulfide-linked.

Its subcellular location is the secreted. It localises to the cell membrane. Its function is as follows. V region of the variable domain of immunoglobulin light chains that participates in the antigen recognition. Immunoglobulins, also known as antibodies, are membrane-bound or secreted glycoproteins produced by B lymphocytes. In the recognition phase of humoral immunity, the membrane-bound immunoglobulins serve as receptors which, upon binding of a specific antigen, trigger the clonal expansion and differentiation of B lymphocytes into immunoglobulins-secreting plasma cells. Secreted immunoglobulins mediate the effector phase of humoral immunity, which results in the elimination of bound antigens. The antigen binding site is formed by the variable domain of one heavy chain, together with that of its associated light chain. Thus, each immunoglobulin has two antigen binding sites with remarkable affinity for a particular antigen. The variable domains are assembled by a process called V-(D)-J rearrangement and can then be subjected to somatic hypermutations which, after exposure to antigen and selection, allow affinity maturation for a particular antigen. The sequence is that of Immunoglobulin lambda variable 1-51 from Homo sapiens (Human).